A 454-amino-acid chain; its full sequence is Transmembrane protein adipocyte-associated 1 homolog (454 aa).

Residues N26 and N44 are each glycosylated (N-linked (GlcNAc...) asparagine). The next 5 helical transmembrane spans lie at 80-100, 113-133, 151-171, 180-200, and 224-244; these read AILI…TSVI, AFTL…VYSM, IIIK…GLLF, ILIA…VQVI, and FVFW…IMCL. An N-linked (GlcNAc...) asparagine glycan is attached at N258. A run of 2 helical transmembrane segments spans residues 262 to 282 and 290 to 310; these read FIYC…AALI and LCFV…IIYF. N-linked (GlcNAc...) asparagine glycosylation is found at N322 and N323. Residues 408 to 454 form a disordered region; sequence RTGSDDFAHHRDSMLSEPSTGTTTRHLKGLGPQGSLVFEEDPSSLRL. Over residues 410–421 the composition is skewed to basic and acidic residues; it reads GSDDFAHHRDSM. The segment covering 445–454 has biased composition (acidic residues); sequence FEEDPSSLRL.

Belongs to the UPF0359 family.

It localises to the membrane. The protein is Transmembrane protein adipocyte-associated 1 homolog (tpra-1) of Caenorhabditis briggsae.